Consider the following 769-residue polypeptide: CO(2)-response secreted protease (769 aa).

A signal peptide spans Met-1–Ala-27. The region spanning Val-35–His-108 is the Inhibitor I9 domain. Residues Ser-112–Met-613 form the Peptidase S8 domain. Catalysis depends on charge relay system residues Asp-145 and His-210. A PA domain is found at Ala-381–Tyr-465. The active-site Charge relay system is Ser-546.

It belongs to the peptidase S8 family. In terms of tissue distribution, expressed in roots, guard cells and meristemoid and pavement cells.

The protein localises to the secreted. It localises to the cell wall. The enzyme catalyses Release of an N-terminal tripeptide from a polypeptide.. Functionally, mediates CO(2)-controlled stomatal development by cleaving peptide EPF2 (AC Q8LC53). Not active on peptides EPF1 (AC Q8S8I4) or stomagen (AC Q9SV72). The sequence is that of CO(2)-response secreted protease from Arabidopsis thaliana (Mouse-ear cress).